A 473-amino-acid chain; its full sequence is Gamma-aminobutyric acid receptor subunit beta-3 (473 aa).

Positions 1–25 are cleaved as a signal peptide; it reads MWGFAGGRLFGIFSAPVLVAVVCCA. Residues 26–246 are Extracellular-facing; that stretch reads QSVNDPGNMS…FRLKRNIGYF (221 aa). 2 N-linked (GlcNAc...) asparagine glycosylation sites follow: Asn-33 and Asn-105. Tyr-122 lines the histamine pocket. Residues Cys-161 and Cys-175 are joined by a disulfide bond. The N-linked (GlcNAc...) asparagine glycan is linked to Asn-174. 4-aminobutanoate-binding residues include Glu-180, Tyr-182, and Thr-227. Histamine-binding positions include 181-182 and Thr-227; that span reads SY. Residues 247–267 form a helical membrane-spanning segment; sequence ILQTYMPSILITILSWVSFWI. Over 268–271 the chain is Cytoplasmic; sequence NYDA. Residues 272 to 292 traverse the membrane as a helical segment; that stretch reads SAARVALGITTVLTMTTINTH. Topologically, residues 293 to 304 are extracellular; the sequence is LRETLPKIPYVK. The helical transmembrane segment at 305–328 threads the bilayer; that stretch reads AIDMYLMGCFVFVFLALLEYAFVN. Over 329–447 the chain is Cytoplasmic; that stretch reads YIFFGRGPQR…KIPDLTDVNA (119 aa). Residues 448–470 form a helical membrane-spanning segment; the sequence is IDRWSRIVFPFTFSLFNLVYWLY. The Extracellular portion of the chain corresponds to 471–473; sequence YVN.

This sequence belongs to the ligand-gated ion channel (TC 1.A.9) family. Gamma-aminobutyric acid receptor (TC 1.A.9.5) subfamily. GABRB3 sub-subfamily. In terms of assembly, heteropentamer, formed by a combination of alpha (GABRA1-6), beta (GABRB1-3), gamma (GABRG1-3), delta (GABRD), epsilon (GABRE), rho (GABRR1-3), pi (GABRP) and theta (GABRQ) chains, each subunit exhibiting distinct physiological and pharmacological properties. Can form functional homopentamers (in vitro). Interacts with UBQLN1. May interact with KIF21B. Identified in a complex of 720 kDa composed of LHFPL4, NLGN2, GABRA1, GABRB2, GABRG2 and GABRB3. Interacts with LHFPL4. Interacts with GIT1; this interaction is required for synaptic GABRB3 surface stability and inhibitory synapse strength.

The protein resides in the postsynaptic cell membrane. Its subcellular location is the cell membrane. It is found in the cytoplasmic vesicle membrane. It carries out the reaction chloride(in) = chloride(out). Its activity is regulated as follows. Potentiated by histamine. Beta subunit of the heteropentameric ligand-gated chloride channel gated by gamma-aminobutyric acid (GABA), a major inhibitory neurotransmitter in the brain. GABA-gated chloride channels, also named GABA(A) receptors (GABAAR), consist of five subunits arranged around a central pore and contain GABA active binding site(s) located at the alpha and beta subunit interface(s). GABAARs containing beta-3/GABRB3 subunit are found at both synaptic and extrasynaptic sites. When activated by GABA, GABAARs selectively allow the flow of chloride anions across the cell membrane down their electrochemical gradient. Chloride influx into the postsynaptic neuron following GABAAR opening decreases the neuron ability to generate a new action potential, thereby reducing nerve transmission. GABAARs containing alpha-1 and beta-3 subunits exhibit synaptogenic activity; the gamma-2 subunit being necessary but not sufficient to induce rapid synaptic contacts formation. Extrasynaptic beta-3 receptors contribute to the tonic GABAergic inhibition. GABAARs containing alpha-1, beta-3 and epsilon subunits may permit spontaneous chloride channel activity while preserving the structural information required for GABA-gated openings. Beta-containing GABAARs can simultaneously bind GABA and histamine where histamine binds at the interface of two neighboring beta subunits, which may be involved in the regulation of sleep and wakefulness. Plays an important role in somatosensation and in the production of antinociception. The sequence is that of Gamma-aminobutyric acid receptor subunit beta-3 from Mus musculus (Mouse).